The following is a 404-amino-acid chain: Probable tRNA sulfurtransferase (404 aa).

Positions 61-166 constitute a THUMP domain; it reads EAVSERLKDV…SGYSYIMCDE (106 aa). ATP is bound by residues 184 to 185, 209 to 210, arginine 266, glycine 288, and glutamine 297; these read LL and HF.

The protein belongs to the ThiI family.

It is found in the cytoplasm. The enzyme catalyses [ThiI sulfur-carrier protein]-S-sulfanyl-L-cysteine + a uridine in tRNA + 2 reduced [2Fe-2S]-[ferredoxin] + ATP + H(+) = [ThiI sulfur-carrier protein]-L-cysteine + a 4-thiouridine in tRNA + 2 oxidized [2Fe-2S]-[ferredoxin] + AMP + diphosphate. It carries out the reaction [ThiS sulfur-carrier protein]-C-terminal Gly-Gly-AMP + S-sulfanyl-L-cysteinyl-[cysteine desulfurase] + AH2 = [ThiS sulfur-carrier protein]-C-terminal-Gly-aminoethanethioate + L-cysteinyl-[cysteine desulfurase] + A + AMP + 2 H(+). It participates in cofactor biosynthesis; thiamine diphosphate biosynthesis. Functionally, catalyzes the ATP-dependent transfer of a sulfur to tRNA to produce 4-thiouridine in position 8 of tRNAs, which functions as a near-UV photosensor. Also catalyzes the transfer of sulfur to the sulfur carrier protein ThiS, forming ThiS-thiocarboxylate. This is a step in the synthesis of thiazole, in the thiamine biosynthesis pathway. The sulfur is donated as persulfide by IscS. In Bacillus cereus (strain B4264), this protein is Probable tRNA sulfurtransferase.